The primary structure comprises 435 residues: Histidine--tRNA ligase (435 aa).

This sequence belongs to the class-II aminoacyl-tRNA synthetase family.

The protein localises to the cytoplasm. The enzyme catalyses tRNA(His) + L-histidine + ATP = L-histidyl-tRNA(His) + AMP + diphosphate + H(+). This chain is Histidine--tRNA ligase (hisS), found in Aeropyrum pernix (strain ATCC 700893 / DSM 11879 / JCM 9820 / NBRC 100138 / K1).